The following is a 372-amino-acid chain: DSC E3 ubiquitin ligase complex subunit 2 (372 aa).

A run of 5 helical transmembrane segments spans residues 26 to 46, 54 to 74, 95 to 115, 126 to 146, and 160 to 180; these read VVAG…LHLL, ILLW…LFII, YMFI…SLLF, TFLI…TVFV, and VIPM…NAFL. Positions 246–314 are disordered; the sequence is TENENQVENP…LPTGPASQLY (69 aa). Over residues 249 to 268 the composition is skewed to polar residues; that stretch reads ENQVENPVSNADANDSPTRQ. Position 264 is a phosphoserine (Ser-264). The residue at position 266 (Thr-266) is a Phosphothreonine. Residues 269–284 show a composition bias toward low complexity; sequence NARATAIASSSNTAAS. Residues 286–305 show a composition bias toward polar residues; it reads RNRQQISHPPLGRTSSSSVL. Residues 332–368 enclose the UBA domain; that stretch reads EDINTVQTIMQTSRAQAIQALSQTNDVQRAVELLLEQ.

As to quaternary structure, component of the DSC E3 ubiquitin ligase complex composed of dsc1, dsc2, dsc3 and dsc4.

It is found in the golgi apparatus membrane. It carries out the reaction S-ubiquitinyl-[E2 ubiquitin-conjugating enzyme]-L-cysteine + [acceptor protein]-L-lysine = [E2 ubiquitin-conjugating enzyme]-L-cysteine + N(6)-ubiquitinyl-[acceptor protein]-L-lysine.. It participates in protein modification; protein ubiquitination. Functionally, component of the DSC E3 ubiquitin ligase complex which is required for the sre1 transcriptional activator proteolytic cleavage to release the soluble transcription factor from the membrane in low oxygen or sterol conditions. The complex also plays an important role in the multivesicular body (MVB) pathway and functions in a post-endoplasmic reticulum pathway for protein degradation. The sequence is that of DSC E3 ubiquitin ligase complex subunit 2 (dsc2) from Schizosaccharomyces pombe (strain 972 / ATCC 24843) (Fission yeast).